A 138-amino-acid chain; its full sequence is Holo-[acyl-carrier-protein] synthase (138 aa).

Positions 8 and 60 each coordinate Mg(2+).

Belongs to the P-Pant transferase superfamily. AcpS family. Mg(2+) is required as a cofactor.

The protein resides in the cytoplasm. The catalysed reaction is apo-[ACP] + CoA = holo-[ACP] + adenosine 3',5'-bisphosphate + H(+). Transfers the 4'-phosphopantetheine moiety from coenzyme A to a Ser of acyl-carrier-protein. This Magnetococcus marinus (strain ATCC BAA-1437 / JCM 17883 / MC-1) protein is Holo-[acyl-carrier-protein] synthase.